The following is a 275-amino-acid chain: Large ribosomal subunit protein uL2 (275 aa).

2 disordered regions span residues 28–49 (APHAALVESQSRSGGRNHHGRI) and 224–246 (AMNPVDHPHGGGEAKAGQGNPHP).

It belongs to the universal ribosomal protein uL2 family. In terms of assembly, part of the 50S ribosomal subunit. Forms a bridge to the 30S subunit in the 70S ribosome.

In terms of biological role, one of the primary rRNA binding proteins. Required for association of the 30S and 50S subunits to form the 70S ribosome, for tRNA binding and peptide bond formation. It has been suggested to have peptidyltransferase activity; this is somewhat controversial. Makes several contacts with the 16S rRNA in the 70S ribosome. The polypeptide is Large ribosomal subunit protein uL2 (Stenotrophomonas maltophilia (strain R551-3)).